Here is a 517-residue protein sequence, read N- to C-terminus: Shugoshin 1 (517 aa).

Residues 1 to 89 (MAKERCQKRS…DVILQLRKEC (89 aa)) are a coiled coil. Residues 1-176 (MAKERCQKRS…DFDSGKVEST (176 aa)) are necessary for interaction with PPP2CA and PPP2R1A. 4 disordered regions span residues 107-136 (QSEE…LSGK), 149-173 (PYQT…SGKV), 267-317 (PEQI…TLDG), and 334-427 (HPTP…QESP). A coiled-coil region spans residues 268–291 (EQIESKHKRARKRRAEQRRTKQRC). Positions 273–302 (KHKRARKRRAEQRRTKQRCKSKSSLRSKGN) are enriched in basic residues. Residues 341-363 (KMNNGCNKETDSSNSEVSDLECS) are compositionally biased toward polar residues. The span at 379 to 390 (RLRDYRESERAV) shows a compositional bias: basic and acidic residues. Phosphoserine is present on Ser-426. Positions 441–445 (PRVKI) match the PXVXL/I motif motif. The D-box signature appears at 447–455 (KPSLPPKRR). Ser-497 is subject to Phosphoserine; by NEK2.

The protein belongs to the shugoshin family. Interacts with PPP2CA (or PPP2CB), PPP2R1B, PPP2R5A, PPP2R5B, PPP2R5C, PPP2R5D, PPP2R5E, SET, LRRC59, RBM10 (or RBM5), RPL10A, RPL28, RPL7, RPL7A and RPLP1. Interaction with protein phosphatase 2A occurs most probably through direct binding to the regulatory B56 subunits: PPP2R1B, PPP2R5A, PPP2R5B, PPP2R5C, PPP2R5D, PPP2R5E. Interacts with PPP2R1A and NEK2. Interacts with CDCA8. In terms of processing, ubiquitinated and degraded during mitotic exit by APC/C-Cdh1. Post-translationally, phosphorylation by NEK2 is essential for chromosome congression in mitosis and for the proper attachment of spindle microtubule to the kinetochore. Phosphorylated by PLK1 and AUKRB. In terms of tissue distribution, ubiquitously expressed in proliferating cells. Moderately expressed in the oocytes.

It is found in the nucleus. Its subcellular location is the chromosome. It localises to the centromere. The protein localises to the kinetochore. The protein resides in the cytoplasm. It is found in the cytoskeleton. Its subcellular location is the spindle pole. It localises to the microtubule organizing center. The protein localises to the centrosome. The protein resides in the nucleus speckle. Functionally, plays a central role in chromosome cohesion during mitosis by preventing premature dissociation of cohesin complex from centromeres after prophase, when most of cohesin complex dissociates from chromosomes arms. May act by preventing phosphorylation of the STAG2 subunit of cohesin complex at the centromere, ensuring cohesin persistence at centromere until cohesin cleavage by ESPL1/separase at anaphase. Essential for proper chromosome segregation during mitosis and this function requires interaction with PPP2R1A. Its phosphorylated form is necessary for chromosome congression and for the proper attachment of spindle microtubule to the kinetochore. Necessary for kinetochore localization of PLK1 and CENPF. May play a role in the tension sensing mechanism of the spindle-assembly checkpoint by regulating PLK1 kinetochore affinity. Involved in centromeric enrichment of AUKRB in prometaphase. This Mus musculus (Mouse) protein is Shugoshin 1.